The chain runs to 188 residues: Elongation factor P-like protein (188 aa).

Belongs to the elongation factor P family.

The protein is Elongation factor P-like protein of Xanthomonas euvesicatoria pv. vesicatoria (strain 85-10) (Xanthomonas campestris pv. vesicatoria).